A 230-amino-acid chain; its full sequence is Triosephosphate isomerase (230 aa).

A substrate-binding site is contributed by 9 to 11 (NYK). The Electrophile role is filled by H93. E141 serves as the catalytic Proton acceptor. Residues I146, G180, and 201–202 (AS) contribute to the substrate site.

Belongs to the triosephosphate isomerase family. Homotetramer; dimer of dimers.

It is found in the cytoplasm. It carries out the reaction D-glyceraldehyde 3-phosphate = dihydroxyacetone phosphate. It functions in the pathway carbohydrate biosynthesis; gluconeogenesis. The protein operates within carbohydrate degradation; glycolysis; D-glyceraldehyde 3-phosphate from glycerone phosphate: step 1/1. In terms of biological role, involved in the gluconeogenesis. Catalyzes stereospecifically the conversion of dihydroxyacetone phosphate (DHAP) to D-glyceraldehyde-3-phosphate (G3P). The protein is Triosephosphate isomerase of Sulfolobus acidocaldarius (strain ATCC 33909 / DSM 639 / JCM 8929 / NBRC 15157 / NCIMB 11770).